We begin with the raw amino-acid sequence, 457 residues long: V-type ATP synthase beta chain (457 aa).

It belongs to the ATPase alpha/beta chains family.

Produces ATP from ADP in the presence of a proton gradient across the membrane. The V-type beta chain is a regulatory subunit. In Clostridioides difficile (strain 630) (Peptoclostridium difficile), this protein is V-type ATP synthase beta chain.